A 582-amino-acid chain; its full sequence is Insulin-like growth factor 2 mRNA-binding protein 3 (582 aa).

2 RRM domains span residues 2-75 and 81-156; these read NKLY…HSVP and CKLQ…YIPD. Positions 164–190 are disordered; it reads PAVGGRRGFNPRGPPRQGSPSLGARPK. The residue at position 182 (serine 182) is a Phosphoserine. 4 KH domains span residues 194 to 259, 275 to 342, 408 to 473, and 490 to 556; these read DVPL…CRNI, EIPL…EEEI, SETV…QGRI, and KLEA…QRKI. Residues 562–582 are disordered; sequence QVRRQQQPKPSAAGPPVARRK.

It belongs to the RRM IMP/VICKZ family. As to quaternary structure, homodimer and multimer.

Its subcellular location is the cytoplasm. The protein localises to the nucleus. It localises to the P-body. The protein resides in the stress granule. Its function is as follows. RNA-binding factor that may recruit target transcripts to cytoplasmic protein-RNA complexes (mRNPs). This transcript 'caging' into mRNPs allows mRNA transport and transient storage. It also modulates the rate and location at which target transcripts encounter the translational apparatus and shields them from endonuclease attacks or microRNA-mediated degradation. Preferentially binds to N6-methyladenosine (m6A)-containing mRNAs and increases their stability. Involved in neuronal crest migration. This chain is Insulin-like growth factor 2 mRNA-binding protein 3 (igf2bp3), found in Danio rerio (Zebrafish).